Consider the following 460-residue polypeptide: Serine--tRNA ligase (460 aa).

Basic and acidic residues predominate over residues 50-65 (DRNEVSSKIGELKQAG). Disordered regions lie at residues 50–71 (DRNE…DAAQ) and 109–129 (PDED…RREG). Residues 109 to 121 (PDEDAPVGDSEAE) are compositionally biased toward acidic residues. 241–243 (TAE) serves as a coordination point for L-serine. Residues 272-274 (RRE) and Val288 contribute to the ATP site. Glu295 provides a ligand contact to L-serine. Position 368–371 (368–371 (EVSS)) interacts with ATP. Ser404 serves as a coordination point for L-serine.

This sequence belongs to the class-II aminoacyl-tRNA synthetase family. Type-1 seryl-tRNA synthetase subfamily. As to quaternary structure, homodimer. The tRNA molecule binds across the dimer.

Its subcellular location is the cytoplasm. It carries out the reaction tRNA(Ser) + L-serine + ATP = L-seryl-tRNA(Ser) + AMP + diphosphate + H(+). The enzyme catalyses tRNA(Sec) + L-serine + ATP = L-seryl-tRNA(Sec) + AMP + diphosphate + H(+). Its pathway is aminoacyl-tRNA biosynthesis; selenocysteinyl-tRNA(Sec) biosynthesis; L-seryl-tRNA(Sec) from L-serine and tRNA(Sec): step 1/1. Catalyzes the attachment of serine to tRNA(Ser). Is also able to aminoacylate tRNA(Sec) with serine, to form the misacylated tRNA L-seryl-tRNA(Sec), which will be further converted into selenocysteinyl-tRNA(Sec). In Halobacterium salinarum (strain ATCC 29341 / DSM 671 / R1), this protein is Serine--tRNA ligase.